Reading from the N-terminus, the 412-residue chain is tRNA pseudouridine synthase Pus10 (412 aa).

The THUMP domain occupies 73-197; that stretch reads HEPSIKFLSN…TGSVEVQIMP (125 aa). Residues tyrosine 308 and tyrosine 376 each contribute to the substrate site.

Belongs to the pseudouridine synthase Pus10 family.

The enzyme catalyses uridine(54) in tRNA = pseudouridine(54) in tRNA. The catalysed reaction is uridine(55) in tRNA = pseudouridine(55) in tRNA. Its function is as follows. Responsible for synthesis of pseudouridine from uracil-54 and uracil-55 in the psi GC loop of transfer RNAs. The chain is tRNA pseudouridine synthase Pus10 from Vulcanisaeta distributa (strain DSM 14429 / JCM 11212 / NBRC 100878 / IC-017).